The primary structure comprises 309 residues: HPr kinase/phosphorylase (309 aa).

Residues His138 and Lys159 contribute to the active site. Position 153–160 (153–160 (GQSGVGKS)) interacts with ATP. Mg(2+) is bound at residue Ser160. Residue Asp177 is the Proton acceptor; for phosphorylation activity. Proton donor; for dephosphorylation activity of the active site. The interval 201–210 (LEIRGLGIIN) is important for the catalytic mechanism of both phosphorylation and dephosphorylation. A Mg(2+)-binding site is contributed by Glu202. The active site involves Arg243. Positions 264–269 (PVRPGR) are important for the catalytic mechanism of dephosphorylation.

This sequence belongs to the HPrK/P family. In terms of assembly, homohexamer. Mg(2+) serves as cofactor.

The enzyme catalyses [HPr protein]-L-serine + ATP = [HPr protein]-O-phospho-L-serine + ADP + H(+). It carries out the reaction [HPr protein]-O-phospho-L-serine + phosphate + H(+) = [HPr protein]-L-serine + diphosphate. Functionally, catalyzes the ATP- as well as the pyrophosphate-dependent phosphorylation of a specific serine residue in HPr, a phosphocarrier protein of the phosphoenolpyruvate-dependent sugar phosphotransferase system (PTS). HprK/P also catalyzes the pyrophosphate-producing, inorganic phosphate-dependent dephosphorylation (phosphorolysis) of seryl-phosphorylated HPr (P-Ser-HPr). The two antagonistic activities of HprK/P are regulated by several intracellular metabolites, which change their concentration in response to the absence or presence of rapidly metabolisable carbon sources (glucose, fructose, etc.) in the growth medium. Also phosphorylates/dephosphorylates the HPr-like catabolite repression protein crh on a specific serine residue. Therefore, by controlling the phosphorylation state of HPr and crh, HPrK/P is a sensor enzyme that plays a major role in the regulation of carbon metabolism and sugar transport: it mediates carbon catabolite repression (CCR), and regulates PTS-catalyzed carbohydrate uptake and inducer exclusion. In Bacillus cereus (strain B4264), this protein is HPr kinase/phosphorylase.